The following is a 183-amino-acid chain: ATP synthase subunit delta (183 aa).

It belongs to the ATPase delta chain family. As to quaternary structure, F-type ATPases have 2 components, F(1) - the catalytic core - and F(0) - the membrane proton channel. F(1) has five subunits: alpha(3), beta(3), gamma(1), delta(1), epsilon(1). F(0) has three main subunits: a(1), b(2) and c(10-14). The alpha and beta chains form an alternating ring which encloses part of the gamma chain. F(1) is attached to F(0) by a central stalk formed by the gamma and epsilon chains, while a peripheral stalk is formed by the delta and b chains.

It localises to the cell inner membrane. In terms of biological role, f(1)F(0) ATP synthase produces ATP from ADP in the presence of a proton or sodium gradient. F-type ATPases consist of two structural domains, F(1) containing the extramembraneous catalytic core and F(0) containing the membrane proton channel, linked together by a central stalk and a peripheral stalk. During catalysis, ATP synthesis in the catalytic domain of F(1) is coupled via a rotary mechanism of the central stalk subunits to proton translocation. Functionally, this protein is part of the stalk that links CF(0) to CF(1). It either transmits conformational changes from CF(0) to CF(1) or is implicated in proton conduction. In Thermotoga neapolitana (strain ATCC 49049 / DSM 4359 / NBRC 107923 / NS-E), this protein is ATP synthase subunit delta.